The primary structure comprises 481 residues: Phloretin 4'-O-glucosyltransferase (481 aa).

His16 serves as the catalytic Proton acceptor. His16 provides a ligand contact to an anthocyanidin. UDP-alpha-D-glucose is bound by residues Gln354, His369, Trp372, Asn373, Ser374, Glu377, Asp393, and Gln394.

It belongs to the UDP-glycosyltransferase family. In terms of tissue distribution, highly expressed in young leaves, at intermediate level in mature leaves and at low levels in flowers and fruits.

It carries out the reaction phloretin + UDP-alpha-D-glucose = trilobatin + UDP + H(+). The enzyme catalyses (2S)-naringenin + UDP-alpha-D-glucose = (2S)-naringenin 7-O-beta-D-glucoside + UDP + H(+). Its function is as follows. Glycosyltransferase that possesses phloretin 4'-O-glycosyltransferase activity. Converts phloretin to trilobatin (phloretin 4'-O-glucoside), a potential antioxidant. Can convert with low efficiency phlorizin and trilobatin to their corresponding di-O-glucosides. Can convert with low efficiency naringenin to naringenin-7-O-glucoside. Can convert with low efficiency quercetin to quercetin-7-O-glucoside. This chain is Phloretin 4'-O-glucosyltransferase, found in Malus domestica (Apple).